Here is a 162-residue protein sequence, read N- to C-terminus: Caveolin-2 (162 aa).

Topologically, residues 1–86 (MGLETEKADV…FEISKYVMYK (86 aa)) are cytoplasmic. Residue Y19 is modified to Phosphotyrosine. S20 and S36 each carry phosphoserine. The helical intramembrane region spans 87–107 (FLTVFLAIPLAFVAGILFATL). The Cytoplasmic segment spans residues 108-162 (SCLHIWIIMPFVKTCLMVLPSVQTIWKSVTDVIIAPLCTSVGRSFSSISLQLSHD).

Belongs to the caveolin family. Homodimer. Caveolin-1 and -2 colocalize and form a stable hetero-oligomeric complex.

The protein resides in the golgi apparatus membrane. The protein localises to the cell membrane. Its subcellular location is the membrane. It is found in the caveola. Functionally, may act as a scaffolding protein within caveolar membranes. Interacts directly with G-protein alpha subunits and can functionally regulate their activity. Caveolin-2 may function as an accessory protein in conjunction with caveolin-1. The polypeptide is Caveolin-2 (CAV2) (Microcebus murinus (Gray mouse lemur)).